We begin with the raw amino-acid sequence, 683 residues long: Dynein, 78 kDa intermediate chain, flagellar outer arm (683 aa).

Positions 1 to 42 (MPALSPAKKGTDKGKTGKKTGKQEQNAQDYIPPPPPMPGDEA) are disordered. WD repeat units follow at residues 358–398 (HTES…DEPI), 407–450 (KLND…LIPE), 562–602 (DLND…LLPL), and 608–647 (VKKAKLTKLVFNPKHPIVLVGDDKGCVTSLKLSPNLRITS).

This sequence belongs to the dynein intermediate chain family. In terms of assembly, consists of at least 3 heavy chains (alpha, beta and gamma), 2 intermediate chains and 8 light chains.

Its subcellular location is the cytoplasm. The protein resides in the cytoskeleton. It localises to the flagellum axoneme. Its function is as follows. Is essential for arm assembly or attachment to the outer doublet microtubule. The protein is Dynein, 78 kDa intermediate chain, flagellar outer arm (ODA9) of Chlamydomonas reinhardtii (Chlamydomonas smithii).